We begin with the raw amino-acid sequence, 156 residues long: Small ribosomal subunit protein uS7 (156 aa).

Belongs to the universal ribosomal protein uS7 family. Part of the 30S ribosomal subunit. Contacts proteins S9 and S11.

In terms of biological role, one of the primary rRNA binding proteins, it binds directly to 16S rRNA where it nucleates assembly of the head domain of the 30S subunit. Is located at the subunit interface close to the decoding center, probably blocks exit of the E-site tRNA. This is Small ribosomal subunit protein uS7 from Brucella anthropi (strain ATCC 49188 / DSM 6882 / CCUG 24695 / JCM 21032 / LMG 3331 / NBRC 15819 / NCTC 12168 / Alc 37) (Ochrobactrum anthropi).